Reading from the N-terminus, the 431-residue chain is Ribosomal protein uS12 methylthiotransferase RimO (431 aa).

An MTTase N-terminal domain is found at 4–120 (LKLYVIVLGC…LAESINKTKK (117 aa)). Positions 13, 49, 83, 150, 154, and 157 each coordinate [4Fe-4S] cluster. In terms of domain architecture, Radical SAM core spans 136 to 365 (DSDLPYAYVK…MEVQAEISFL (230 aa)). The region spanning 368-431 (QRLVGKVIDV…TYDLEGELVE (64 aa)) is the TRAM domain.

Belongs to the methylthiotransferase family. RimO subfamily. It depends on [4Fe-4S] cluster as a cofactor.

Its subcellular location is the cytoplasm. The catalysed reaction is L-aspartate(89)-[ribosomal protein uS12]-hydrogen + (sulfur carrier)-SH + AH2 + 2 S-adenosyl-L-methionine = 3-methylsulfanyl-L-aspartate(89)-[ribosomal protein uS12]-hydrogen + (sulfur carrier)-H + 5'-deoxyadenosine + L-methionine + A + S-adenosyl-L-homocysteine + 2 H(+). Its function is as follows. Catalyzes the methylthiolation of an aspartic acid residue of ribosomal protein uS12. This chain is Ribosomal protein uS12 methylthiotransferase RimO, found in Fervidobacterium nodosum (strain ATCC 35602 / DSM 5306 / Rt17-B1).